The primary structure comprises 182 residues: ATP-dependent protease subunit HslV (182 aa).

The active site involves T9. Positions 167, 170, and 173 each coordinate Na(+).

The protein belongs to the peptidase T1B family. HslV subfamily. As to quaternary structure, a double ring-shaped homohexamer of HslV is capped on each side by a ring-shaped HslU homohexamer. The assembly of the HslU/HslV complex is dependent on binding of ATP.

The protein localises to the cytoplasm. It catalyses the reaction ATP-dependent cleavage of peptide bonds with broad specificity.. Its activity is regulated as follows. Allosterically activated by HslU binding. Its function is as follows. Protease subunit of a proteasome-like degradation complex believed to be a general protein degrading machinery. The chain is ATP-dependent protease subunit HslV from Enterococcus faecalis (strain ATCC 700802 / V583).